A 78-amino-acid chain; its full sequence is D-alanyl carrier protein (78 aa).

Residues Met-1–Lys-78 form the Carrier domain. Ser-36 carries the O-(pantetheine 4'-phosphoryl)serine modification.

Belongs to the DltC family. In terms of processing, 4'-phosphopantetheine is transferred from CoA to a specific serine of apo-DCP.

The protein localises to the cytoplasm. It participates in cell wall biogenesis; lipoteichoic acid biosynthesis. In terms of biological role, carrier protein involved in the D-alanylation of lipoteichoic acid (LTA). The loading of thioester-linked D-alanine onto DltC is catalyzed by D-alanine--D-alanyl carrier protein ligase DltA. The DltC-carried D-alanyl group is further transferred to cell membrane phosphatidylglycerol (PG) by forming an ester bond, probably catalyzed by DltD. D-alanylation of LTA plays an important role in modulating the properties of the cell wall in Gram-positive bacteria, influencing the net charge of the cell wall. This chain is D-alanyl carrier protein, found in Listeria monocytogenes serotype 4a (strain HCC23).